We begin with the raw amino-acid sequence, 491 residues long: UDP-N-acetylmuramoyl-L-alanyl-D-glutamate--2,6-diaminopimelate ligase (491 aa).

Ser30 provides a ligand contact to UDP-N-acetyl-alpha-D-muramoyl-L-alanyl-D-glutamate. 108–114 (GTNGKTT) provides a ligand contact to ATP. UDP-N-acetyl-alpha-D-muramoyl-L-alanyl-D-glutamate is bound by residues Asn149, 150 to 151 (TT), Ser177, Gln183, and Arg185. Lys217 carries the post-translational modification N6-carboxylysine. Residues Arg383, 407-410 (DNPR), Gly458, and Glu462 each bind meso-2,6-diaminopimelate. A Meso-diaminopimelate recognition motif motif is present at residues 407-410 (DNPR).

It belongs to the MurCDEF family. MurE subfamily. Requires Mg(2+) as cofactor. Post-translationally, carboxylation is probably crucial for Mg(2+) binding and, consequently, for the gamma-phosphate positioning of ATP.

It is found in the cytoplasm. It carries out the reaction UDP-N-acetyl-alpha-D-muramoyl-L-alanyl-D-glutamate + meso-2,6-diaminopimelate + ATP = UDP-N-acetyl-alpha-D-muramoyl-L-alanyl-gamma-D-glutamyl-meso-2,6-diaminopimelate + ADP + phosphate + H(+). Its pathway is cell wall biogenesis; peptidoglycan biosynthesis. In terms of biological role, catalyzes the addition of meso-diaminopimelic acid to the nucleotide precursor UDP-N-acetylmuramoyl-L-alanyl-D-glutamate (UMAG) in the biosynthesis of bacterial cell-wall peptidoglycan. This chain is UDP-N-acetylmuramoyl-L-alanyl-D-glutamate--2,6-diaminopimelate ligase, found in Listeria innocua serovar 6a (strain ATCC BAA-680 / CLIP 11262).